The following is a 312-amino-acid chain: Carbonic anhydrase 4 (312 aa).

Positions 1–18 (MRLLLALLVLAAAPPQAR) are cleaved as a signal peptide. Residues 21–285 (SHWCYQIQVK…LGQRQVFRSG (265 aa)) enclose the Alpha-carbonic anhydrase domain. 2 disulfides stabilise this stretch: cysteine 24/cysteine 36 and cysteine 46/cysteine 229. An N-linked (GlcNAc...) asparagine glycan is attached at asparagine 33. The active-site Proton donor/acceptor is histidine 88. The Zn(2+) site is built by histidine 115, histidine 117, and histidine 140. Residues asparagine 152 and asparagine 195 are each glycosylated (N-linked (GlcNAc...) asparagine). Position 225–226 (225–226 (TT)) interacts with substrate. Asparagine 265 carries an N-linked (GlcNAc...) asparagine glycan. Serine 284 is lipidated: GPI-anchor amidated serine. Positions 285-312 (GAPGLLLAQPLPTLLAPVLACLTVGFLR) are cleaved as a propeptide — removed in mature form.

Belongs to the alpha-carbonic anhydrase family. Interacts with SLC4A4. Requires Zn(2+) as cofactor.

The protein resides in the cell membrane. It carries out the reaction hydrogencarbonate + H(+) = CO2 + H2O. Inhibited by acetazolamide. Functionally, catalyzes the reversible hydration of carbon dioxide into bicarbonate and protons and thus is essential to maintaining intracellular and extracellular pH. May stimulate the sodium/bicarbonate transporter activity of SLC4A4 that acts in pH homeostasis. It is essential for acid overload removal from the retina and retina epithelium, and acid release in the choriocapillaris in the choroid. This Bos taurus (Bovine) protein is Carbonic anhydrase 4 (CA4).